Consider the following 334-residue polypeptide: Beta-ketoacyl-[acyl-carrier-protein] synthase III (334 aa).

Residues cysteine 116 and histidine 256 contribute to the active site. The segment at 257–261 (QANLR) is ACP-binding. The active site involves asparagine 286.

It belongs to the thiolase-like superfamily. FabH family. As to quaternary structure, homodimer.

It localises to the cytoplasm. The enzyme catalyses malonyl-[ACP] + acetyl-CoA + H(+) = 3-oxobutanoyl-[ACP] + CO2 + CoA. It functions in the pathway lipid metabolism; fatty acid biosynthesis. Its function is as follows. Catalyzes the condensation reaction of fatty acid synthesis by the addition to an acyl acceptor of two carbons from malonyl-ACP. Catalyzes the first condensation reaction which initiates fatty acid synthesis and may therefore play a role in governing the total rate of fatty acid production. Possesses both acetoacetyl-ACP synthase and acetyl transacylase activities. Its substrate specificity determines the biosynthesis of branched-chain and/or straight-chain of fatty acids. In Phocaeicola vulgatus (strain ATCC 8482 / DSM 1447 / JCM 5826 / CCUG 4940 / NBRC 14291 / NCTC 11154) (Bacteroides vulgatus), this protein is Beta-ketoacyl-[acyl-carrier-protein] synthase III.